The sequence spans 372 residues: Glutamate 5-kinase (372 aa).

Lysine 14 is an ATP binding site. 3 residues coordinate substrate: serine 54, aspartate 141, and asparagine 153. 173–174 (TD) contributes to the ATP binding site. In terms of domain architecture, PUA spans 280–358 (RGHVVIDAGA…GEIETVLGYM (79 aa)).

Belongs to the glutamate 5-kinase family.

It is found in the cytoplasm. The catalysed reaction is L-glutamate + ATP = L-glutamyl 5-phosphate + ADP. It functions in the pathway amino-acid biosynthesis; L-proline biosynthesis; L-glutamate 5-semialdehyde from L-glutamate: step 1/2. Functionally, catalyzes the transfer of a phosphate group to glutamate to form L-glutamate 5-phosphate. The polypeptide is Glutamate 5-kinase (Burkholderia orbicola (strain AU 1054)).